The sequence spans 138 residues: Cysteine desulfuration protein SufE (138 aa).

The active-site Cysteine persulfide intermediate is cysteine 51.

Belongs to the SufE family. As to quaternary structure, homodimer. Interacts with SufS.

It is found in the cytoplasm. It functions in the pathway cofactor biosynthesis; iron-sulfur cluster biosynthesis. In terms of biological role, participates in cysteine desulfuration mediated by SufS. Cysteine desulfuration mobilizes sulfur from L-cysteine to yield L-alanine and constitutes an essential step in sulfur metabolism for biosynthesis of a variety of sulfur-containing biomolecules. Functions as a sulfur acceptor for SufS, by mediating the direct transfer of the sulfur atom from the S-sulfanylcysteine of SufS, an intermediate product of cysteine desulfuration process. In Escherichia coli O157:H7, this protein is Cysteine desulfuration protein SufE.